The primary structure comprises 723 residues: UPF0313 protein YgiQ (723 aa).

The Radical SAM core domain maps to 372–650; that stretch reads AYEMIRFSIN…KALLRYHDPA (279 aa). [4Fe-4S] cluster is bound by residues Cys-386, Cys-390, and Cys-393. Residues 686–723 form a disordered region; the sequence is EARRQNRNTRPALTKHTPVEHQRQGLAANKKRGKGAGR. Residues 714 to 723 are compositionally biased toward basic residues; it reads NKKRGKGAGR.

It belongs to the UPF0313 family. [4Fe-4S] cluster serves as cofactor.

This Salmonella typhimurium (strain LT2 / SGSC1412 / ATCC 700720) protein is UPF0313 protein YgiQ.